The primary structure comprises 353 residues: Putative transport protein YrrI (353 aa).

Transmembrane regions (helical) follow at residues 8–28 (LLLW…FFML), 37–57 (LVIK…YLLL), 77–97 (IYVL…PVLI), 165–185 (FLIA…IELM), 220–240 (LLVC…FGLP), 243–263 (LILG…PFIG), 269–289 (LIAM…VFIL), and 311–331 (VVIM…GMIL).

This sequence belongs to the autoinducer-2 exporter (AI-2E) (TC 2.A.86) family.

The protein resides in the cell membrane. The protein is Putative transport protein YrrI (yrrI) of Bacillus subtilis (strain 168).